The sequence spans 120 residues: NAD(P)H-quinone oxidoreductase subunit 3 (120 aa).

The next 3 helical transmembrane spans lie at 10–30, 64–84, and 89–109; these read FLGF…TNLI, MFAL…PWAV, and LGLL…IALA.

Belongs to the complex I subunit 3 family. In terms of assembly, NDH-1 can be composed of about 15 different subunits; different subcomplexes with different compositions have been identified which probably have different functions.

It is found in the cellular thylakoid membrane. The catalysed reaction is a plastoquinone + NADH + (n+1) H(+)(in) = a plastoquinol + NAD(+) + n H(+)(out). The enzyme catalyses a plastoquinone + NADPH + (n+1) H(+)(in) = a plastoquinol + NADP(+) + n H(+)(out). Its function is as follows. NDH-1 shuttles electrons from an unknown electron donor, via FMN and iron-sulfur (Fe-S) centers, to quinones in the respiratory and/or the photosynthetic chain. The immediate electron acceptor for the enzyme in this species is believed to be plastoquinone. Couples the redox reaction to proton translocation, and thus conserves the redox energy in a proton gradient. Cyanobacterial NDH-1 also plays a role in inorganic carbon-concentration. This is NAD(P)H-quinone oxidoreductase subunit 3 from Prochlorococcus marinus (strain AS9601).